The chain runs to 224 residues: Urease accessory protein UreF (224 aa).

This sequence belongs to the UreF family. As to quaternary structure, ureD, UreF and UreG form a complex that acts as a GTP-hydrolysis-dependent molecular chaperone, activating the urease apoprotein by helping to assemble the nickel containing metallocenter of UreC. The UreE protein probably delivers the nickel.

It is found in the cytoplasm. Functionally, required for maturation of urease via the functional incorporation of the urease nickel metallocenter. In Pseudomonas fluorescens (strain Pf0-1), this protein is Urease accessory protein UreF.